The sequence spans 475 residues: Ankyrin repeat, SAM and basic leucine zipper domain-containing protein 1 (475 aa).

Residues 1 to 25 form a disordered region; the sequence is MAAGALRGLPVAGGGESSESEDDGW. Ser17, Ser18, and Ser20 each carry phosphoserine. ANK repeat units follow at residues 45–74, 78–107, 110–144, 148–177, 181–210, and 214–243; these read EKKEKFKKAMTIGDVSLVQELLDSGISVDS, YGWTPLMYAASVANAELVRVLLDRGANASF, DKQSILITACSARGSEEQILKCVELLLSRNADPNV, RLMTPIMYAARDGHTQVVALLVAHGAEVNT, NGYTALTWAARQGHKNIVLKLLELGANKML, and DGKMPSEIAKRNKHHEIFNLLSFTLNPLEG. The SAM domain occupies 272–334; sequence SYTAFGDLEV…KILAALKELQ (63 aa).

In terms of assembly, interacts with DDX4, PIWIL1, RANBP9 and TDRD1.

The protein localises to the cytoplasm. In terms of biological role, plays a central role during spermatogenesis by repressing transposable elements and preventing their mobilization, which is essential for the germline integrity. Acts via the piRNA metabolic process, which mediates the repression of transposable elements during meiosis by forming complexes composed of piRNAs and Piwi proteins and governs the methylation and subsequent repression of transposons. Its association with pi-bodies suggests a participation in the primary piRNAs metabolic process. Required prior to the pachytene stage to facilitate the production of multiple types of piRNAs, including those associated with repeats involved in the regulation of retrotransposons. May act by mediating protein-protein interactions during germ cell maturation. The chain is Ankyrin repeat, SAM and basic leucine zipper domain-containing protein 1 (ASZ1) from Pongo abelii (Sumatran orangutan).